Reading from the N-terminus, the 347-residue chain is Ribosomal RNA small subunit methyltransferase C (347 aa).

Belongs to the methyltransferase superfamily. RsmC family. Monomer.

The protein localises to the cytoplasm. It carries out the reaction guanosine(1207) in 16S rRNA + S-adenosyl-L-methionine = N(2)-methylguanosine(1207) in 16S rRNA + S-adenosyl-L-homocysteine + H(+). Functionally, specifically methylates the guanine in position 1207 of 16S rRNA in the 30S particle. In Shewanella putrefaciens (strain CN-32 / ATCC BAA-453), this protein is Ribosomal RNA small subunit methyltransferase C.